A 379-amino-acid chain; its full sequence is Wnt inhibitory factor 1 (379 aa).

Positions 1 to 28 (MARRRAFPAFALRLWSILPCLLLLRADA) are cleaved as a signal peptide. One can recognise a WIF domain in the interval 38–177 (LWIDAHQARV…PQNAIFFKTC (140 aa)). N-linked (GlcNAc...) asparagine glycosylation is present at Asn-88. 7 disulfides stabilise this stretch: Cys-140–Cys-177, Cys-182–Cys-192, Cys-186–Cys-198, Cys-200–Cys-209, Cys-214–Cys-224, Cys-218–Cys-230, and Cys-232–Cys-241. EGF-like domains lie at 178-210 (QQAECPGGCRNGGFCNERRVCECPDGFYGPHCE), 211-242 (KALCIPRCMNGGLCVTPGFCICPPGFYGVNCD), 243-271 (KANCSTTCFNGGTCFYPGKCICPPGLEGE), 274-306 (ELSKCPQPCRNGGKCIGKSKCKCPKGYQGDLCS), and 307-338 (KPVCEPGCGAHGTCHEPNKCQCREGWHGRHCN). The N-linked (GlcNAc...) asparagine glycan is linked to Asn-245. Cystine bridges form between Cys-246–Cys-256, Cys-250–Cys-262, Cys-278–Cys-288, Cys-282–Cys-294, Cys-296–Cys-305, Cys-310–Cys-320, Cys-314–Cys-326, and Cys-328–Cys-337. A disordered region spans residues 348–379 (APRPAGAGLERHTPSLKKAEDRRDPPESNYIW). Residues 356–373 (LERHTPSLKKAEDRRDPP) show a composition bias toward basic and acidic residues.

Interacts with MYOC. Expression highest in heart and lung. Lower in brain and eye.

Its subcellular location is the secreted. Its function is as follows. Binds to WNT proteins and inhibits their activities. May be involved in mesoderm segmentation. This Mus musculus (Mouse) protein is Wnt inhibitory factor 1 (Wif1).